The following is a 740-amino-acid chain: MFSTTTHSVPYLYLGNFSRKPHYYSVNRTKLHGSAGAARLSKSTSTSSRSHDLVLDLRNLLSRSSASIQGMVERAARLNGILDRRLVDDVLAKVTSMLPSMRDVRVTLEESATQIGRVQLQNYQFEVSLTGAAGSVPTGANVKVIPTITPGLLRPLFSQQQLNQIRGFKTDRSIEAEQKRNPTMTSRLKNALANSPQRLDGDTPLQAEKLRRLLAKSEEHGFNKAESLKIAFAEGYLAAANSEDSPKSGKTMKYLKTLQTIVVIVVFLGIFLSFFTTSNGSVFRSIQLGNQVEVDPEEINVTFEDVKGCDEAKQELKEVVEFLKSPEKFSNLGGKLPKGVLLVGPPGTGKTLLARAVAGEAKVPFFHAAGPEFDEVLVGQGARRVRDLFKAAKARAPCVIFIDEIDSVGAKRTNSVLHPYANQTINQLLSEMDGFHQNAGVIVLGATNRRDDLDQALLRPGRFDVEVMVSTPDFTGRKEILSLYLTKILHDEIDLDMLARGTSGFTGADLENMINQAALRAAIDGAETVSMKHLETARDKVLMGPERKARLPDEEANTITAYHEGGHAIVAFYTKESHPLHKVTIMPRGPSLGHTAYIPEKERYHVTKAQLLAMMDTMMGGRAAEELVFGTDKITSGASSDLKQATSIATHMVRDWGMSDKVGLRTIEASKGLGTGDTLGPNTIEAVDAEIKRILSDSYERAKAILRKHTREHKALAEALLKYETLDADDIKAILNESQT.

The Mitochondrial matrix segment spans residues 1-256 (MFSTTTHSVP…KSGKTMKYLK (256 aa)). The helical transmembrane segment at 257–277 (TLQTIVVIVVFLGIFLSFFTT) threads the bilayer. Topologically, residues 278–740 (SNGSVFRSIQ…IKAILNESQT (463 aa)) are mitochondrial intermembrane. 347-351 (GTGKT) serves as a coordination point for ATP. His-563 lines the Zn(2+) pocket. Glu-564 is an active-site residue. Positions 567 and 641 each coordinate Zn(2+).

This sequence in the N-terminal section; belongs to the AAA ATPase family. The protein in the C-terminal section; belongs to the peptidase M41 family. Requires Zn(2+) as cofactor.

It localises to the mitochondrion inner membrane. ATP-dependent metalloprotease that catalyzes the degradation of folded and unfolded proteins with a suitable degron sequence in the mitochondrial intermembrane region. Plays an important role in regulating mitochondrial morphology and function by cleaving Opa1, giving rise to a form of Opa1 that promotes maintenance of normal mitochondrial structure and mitochondrial protein metabolism. Ensures cell proliferation, maintains normal cristae morphology and complex I respiration activity, promotes antiapoptotic activity and protects mitochondria from the accumulation of oxidatively damaged membrane proteins. Required to control the accumulation of nonassembled respiratory chain subunits such as ND-30. This Drosophila melanogaster (Fruit fly) protein is ATP-dependent zinc metalloprotease YME1L.